A 100-amino-acid polypeptide reads, in one-letter code: Urease subunit gamma (100 aa).

Belongs to the urease gamma subunit family. Heterotrimer of UreA (gamma), UreB (beta) and UreC (alpha) subunits. Three heterotrimers associate to form the active enzyme.

It localises to the cytoplasm. The catalysed reaction is urea + 2 H2O + H(+) = hydrogencarbonate + 2 NH4(+). It functions in the pathway nitrogen metabolism; urea degradation; CO(2) and NH(3) from urea (urease route): step 1/1. This Alkalilimnicola ehrlichii (strain ATCC BAA-1101 / DSM 17681 / MLHE-1) protein is Urease subunit gamma.